A 509-amino-acid polypeptide reads, in one-letter code: MVFADFLEKIKSLFAKTKDPITSMSPPQENRSPKAEYLNNFFNTNPTNGKSRGSQEAPRKPLGQTNLNVQGSMPAKKEGFNRVLDGLKKRQLQHDFKLERAAETYEPTQNIGSGAFGIVCEAVETSSNQKVAIKKVAHASATPTLARRTLREIRVLRYINHPNIVPLRDIFRTKGPLGIDVFLVMDLMQNNLHHIIYGNEDPLEEHYINAFLGQLLRGLEYLHAACIAHRDLKPSNLLVNQDGTLRIADFGMAKCADNSSKKHDDEEHCYYMTQHVATLPYRAPELLFVLPEHSTAVDMWAVGCIFGEMVIRNEILPGRSVQGQIKMLLTMLGQPPQEVINEVRCDRTRKLIQDFGRKADAEWDDIMFCKARGDDQIVRGNCDTIDFVKQLFQYDAQKRINIQDALLHPYIQRVIPAEAPQKKCPFRVKKDMMQVEDLNHQELISMMKQDVRSAENPITYSELHSGDSTGSTSDMSTNTSGEYSPIAQHEQLLEDVATQISICEPTCDL.

The disordered stretch occupies residues 19–72 (DPITSMSPPQENRSPKAEYLNNFFNTNPTNGKSRGSQEAPRKPLGQTNLNVQGS). 2 stretches are compositionally biased toward polar residues: residues 20-30 (PITSMSPPQEN) and 40-54 (NFFN…SRGS). A Protein kinase domain is found at 105–411 (YEPTQNIGSG…IQDALLHPYI (307 aa)). ATP contacts are provided by residues 111-119 (IGSGAFGIV) and K134. The active-site Proton acceptor is D231. A disordered region spans residues 460–482 (YSELHSGDSTGSTSDMSTNTSGE). The segment covering 466–481 (GDSTGSTSDMSTNTSG) has biased composition (low complexity).

Belongs to the protein kinase superfamily. CMGC Ser/Thr protein kinase family. MAP kinase subfamily. The cofactor is Mg(2+). Expressed in intestine with a stronger expression in the four most anterior cells, muscles, excretory cell, pharynx and, to a lesser extent, in hypodermis.

It catalyses the reaction L-seryl-[protein] + ATP = O-phospho-L-seryl-[protein] + ADP + H(+). It carries out the reaction L-threonyl-[protein] + ATP = O-phospho-L-threonyl-[protein] + ADP + H(+). Its function is as follows. Serine/threonine-protein kinase involved in the postembryonic regulation of body size, mainly through control of cell growth. In particular, controls the volume of intestine, muscles and hypodermis. In addition, regulates growth, intestinal granule distribution, lifespan and number of offspring. The sequence is that of Mitogen-activated protein kinase sma-5 from Caenorhabditis elegans.